An 82-amino-acid chain; its full sequence is UPF0213 protein SERP0126 (82 aa).

The GIY-YIG domain occupies 2 to 77 (DKHFVYIVKC…KTYTRQQKLK (76 aa)).

Belongs to the UPF0213 family.

This is UPF0213 protein SERP0126 from Staphylococcus epidermidis (strain ATCC 35984 / DSM 28319 / BCRC 17069 / CCUG 31568 / BM 3577 / RP62A).